Reading from the N-terminus, the 248-residue chain is UPF0736 protein Bcer98_0893 (248 aa).

The protein belongs to the UPF0736 family.

The sequence is that of UPF0736 protein Bcer98_0893 from Bacillus cytotoxicus (strain DSM 22905 / CIP 110041 / 391-98 / NVH 391-98).